The following is a 432-amino-acid chain: MAVAPAGGQHAPALEALLGAGALRLLDSSQIVIISTAPDVGAPQVPTGPAAPPAGPRDPDVLLFATPQAPRPAPSAPRPALGRPPVKRRLDLETDHQYLAGSSGPFRGRGRHPGKGVKSPGEKSRYETSLNLTTKRFLELLSHSADGVVDLNWAAEVLKVQKRRIYDITNVLEGIQLIAKKSKNHIQWLGSRTMVGIGQRLEGLTQDLQQLQESEQQLDHLMHICTTQLQLLSEDSDIQRLAYVTCQDLRSIADPAEQMVIVIKAPPETQLQAVDSAETFQISLKSKQGPIDVFLCPEESAEGISPGRTSYQETSGEDRNADSGTAGPPPSPPSTSPTLDPSQSLLGLEQEAVLPRIGNLRAPMEEDRLSPLVAADSLLEHVKEDFSGLLPGEFISLSPPHEAVDYHFGLEEGEGIRDLFDCDFGDLTPLDF.

2 disordered regions span residues 39-85 and 98-126; these read DVGA…GRPP and YLAG…KSRY. Residues 65–106 form a cyclin A:CDK2 binding region; sequence ATPQAPRPAPSAPRPALGRPPVKRRLDLETDHQYLAGSSGPF. The interval 87–189 is interaction with BIRC2/c-IAP1; that stretch reads KRRLDLETDH…KKSKNHIQWL (103 aa). Residues 108–192 mediate DNA binding; that stretch reads GRGRHPGKGV…KNHIQWLGSR (85 aa). Residues Lys-115, Lys-118, and Lys-123 each carry the N6-acetyllysine modification. The segment at 151–172 is leucine-zipper; that stretch reads LNWAAEVLKVQKRRIYDITNVL. A DEF box motif is present at residues 156 to 192; the sequence is EVLKVQKRRIYDITNVLEGIQLIAKKSKNHIQWLGSR. Residue Lys-183 is modified to N6-methyllysine; by SETD7. The segment at 190–377 is required for interaction with TRIM28; that stretch reads GSRTMVGIGQ…RLSPLVAADS (188 aa). The dimerization stretch occupies residues 193–282; sequence TMVGIGQRLE…AVDSAETFQI (90 aa). Residues 297 to 342 form a disordered region; it reads PEESAEGISPGRTSYQETSGEDRNADSGTAGPPPSPPSTSPTLDPS. Positions 363-432 are transactivation; sequence PMEEDRLSPL…DFGDLTPLDF (70 aa). Phosphoserine is present on residues Ser-370 and Ser-398. The tract at residues 404 to 421 is RB1 binding; it reads VDYHFGLEEGEGIRDLFD. Thr-428 carries the phosphothreonine modification.

This sequence belongs to the E2F/DP family. As to quaternary structure, component of the DRTF1/E2F transcription factor complex. Forms heterodimers with DP family members. The E2F1 complex binds specifically hypophosphorylated RB1, the interaction represses E2F1-driven transcription. During the cell cycle, RB1 becomes phosphorylated in mid-to-late G1 phase, detaches from the DRTF1/E2F complex, rendering E2F transcriptionally active. Interacts with TRRAP, which probably mediates its interaction with histone acetyltransferase complexes, leading to transcription activation. Binds TOPBP1 and EAPP. Interacts with ARID3A. Interacts with TRIM28; the interaction inhibits E2F1 acetylation through recruiting HDAC1 and represses its transcriptional activity. Interaction with KAT2B; the interaction acetylates E2F1 enhancing its DNA-binding and transcriptional activity. Interacts with BIRC2/c-IAP1 (via BIR domains). The complex TFDP1:E2F1 interacts with CEBPA; the interaction prevents CEBPA binding to target genes promoters and represses its transcriptional activity. Interacts with RRP1B. Interacts with HCFC1. Interacts with KMT2E; the interaction is probably indirect and is mediated via HCFC1. Interacts with DCAF5 and L3MBTL3; the interaction requires methylation at Lys-183 and is necessary to target E2F1 for ubiquitination by the CRL4-DCAF5 E3 ubiquitin ligase complex. In terms of processing, phosphorylated by CDK2 and cyclin A-CDK2 in the S-phase. Phosphorylation by CHEK2 stabilizes E2F1 upon DNA damage and regulates its effect on transcription and apoptosis. Phosphorylation at Ser-398 by GSK3B promotes interaction with USP11, leading to its deubiquitination and stabilization. Post-translationally, ubiquitinated via 'Lys-63'-linked ubiquitin, leading to its degradation. Deubiquitinated by USP11 following phosphorylation by GSK3B, promoting its stability. Acetylation stimulates DNA-binding. Enhanced under stress conditions such as DNA damage and inhibited by retinoblastoma protein RB1. Regulated by KAP1/TRIM28 which recruits HDAC1 to E2F1 resulting in deacetylation. In terms of processing, methylation at Lys-183 by SETD7 promotes E2F1 ubiquitin-dependent proteasomal degradation.

It is found in the nucleus. With respect to regulation, BIRC2/c-IAP1 stimulates its transcriptional activity. Transcription activator that binds DNA cooperatively with DP proteins through the E2 recognition site, 5'-TTTC[CG]CGC-3' found in the promoter region of a number of genes whose products are involved in cell cycle regulation or in DNA replication. The DRTF1/E2F complex functions in the control of cell-cycle progression from G1 to S phase. E2F1 binds preferentially RB1 in a cell-cycle dependent manner. It can mediate both cell proliferation and TP53/p53-dependent apoptosis. Blocks adipocyte differentiation by binding to specific promoters repressing CEBPA binding to its target gene promoters. Directly activates transcription of PEG10. Positively regulates transcription of RRP1B. The protein is Transcription factor E2F1 of Rattus norvegicus (Rat).